The sequence spans 723 residues: MQNSEGGADSPASVALRPSAAAPPVPASPQRVLVQAASSNPKGAQMQPISLPRVQQVPQQVQPVQHVYPAQVQYVEGGDAVYTNGAIRTAYTYNPEPQMYAPSSTASYFEAPGGAQVTVAASSPPAVPSHSMVGITMDVGGSPIVSSAGAYLIHGGMDSTRHSLAHTSRSSPATLEMAIENLQKSEGITSHKSGLLNSHLQWLLDNYETAEGVSLPRSSLYNHYLRHCQEHKLDPVNAASFGKLIRSVFMGLRTRRLGTRGNSKYHYYGIRLKPDSPLNRLQEDTQYMAMRQQPMHQKPRYRPAQKTDSLGDSGSHSGLHSTPEQTMAVQSQHHQQYIDVSHVFPEFPAPDLGSFLLQDGVTLHDVKALQLVYRRHCEATVDVVMNLQFHYIEKLWLSFWNSKASSSDGPTSLPASDEDPEGAVLPKDKLISLCQCDPILRWMRSCDHILYQALVEILIPDVLRPVPSTLTQAIRNFAKSLEGWLTNAMSDFPQQVIQTKVGVVSAFAQTLRRYTSLNHLAQAARAVLQNTSQINQMLSDLNRVDFANVQEQASWVCQCEESVVQRLEQDFKLTLQQQSSLDQWASWLDSVVTQVLKQHAGSPSFPKAARQFLLKWSFYSSMVIRDLTLRSAASFGSFHLIRLLYDEYMFYLVEHRVAEATGETPIAVMGEFNDLASLSLTLLDKDDMGDEQRGSEAGPDARSLGEPLVKRERSDPNHSLQGI.

Positions 1-46 are disordered; that stretch reads MQNSEGGADSPASVALRPSAAAPPVPASPQRVLVQAASSNPKGAQM. A compositionally biased stretch (low complexity) spans 10–20; the sequence is SPASVALRPSA. Serine 28 bears the Phosphoserine mark. The RFX-type winged-helix DNA-binding region spans 199 to 274; the sequence is HLQWLLDNYE…YHYYGIRLKP (76 aa). The interval 292–332 is disordered; sequence QQPMHQKPRYRPAQKTDSLGDSGSHSGLHSTPEQTMAVQSQ. The segment covering 308–321 has biased composition (low complexity); sequence DSLGDSGSHSGLHS. Over residues 322–332 the composition is skewed to polar residues; that stretch reads TPEQTMAVQSQ. Serine 416 is modified (phosphoserine). The disordered stretch occupies residues 688 to 723; that stretch reads MGDEQRGSEAGPDARSLGEPLVKRERSDPNHSLQGI.

Belongs to the RFX family. As to quaternary structure, homodimer; probably only forms homodimers in testis. Heterodimer; heterodimerizes with RFX1 and RFX3.

It localises to the nucleus. Its subcellular location is the cytoplasm. Functionally, transcription factor that acts as a key regulator of spermatogenesis. Acts by regulating expression of genes required for the haploid phase during spermiogenesis, such as genes required for cilium assembly and function. Recognizes and binds the X-box, a regulatory motif with DNA sequence 5'-GTNRCC(0-3N)RGYAAC-3' present on promoters. Probably activates transcription of the testis-specific histone gene H1-6. The chain is DNA-binding protein RFX2 (RFX2) from Homo sapiens (Human).